Consider the following 483-residue polypeptide: MAAGCEGIAPPTLGERTVGEEGEPVKPFTPEKAKEIIMSLQQPAIFCNMVFDWPSRHWTAKHLSKVLEGKQIRFRMGLRGTGTVPQYETECSYVDATLEEFLTWNCDQSSISGPFKDYEHSKFWAYADYKYFVTLFEDKTDVFQEVVWSDFGFPGRNGQESTLWIGSFGAHTPCHLDSYGCNLVFQVQGRKRWHLFPPEDTPFLYPTRIPYEESSVFSKINVVNPDLKCFPQFQKARRHMVTLSPGQVLFVPRHWWHYVESLDPVTVSINSWIELEEDHLARVEEAITRMLVCTLKTAEDPHHPRTWLNPTEVEETSHEVNSCYLNSAVCAFFDHCEKAKAVELQVLSANGAEPRVQEEHMEVEQAQGPSLTSRAEKQEAVSLFGPDLIPVTPASEERGGALEGDSEESVSSNGGHFAELPCARRQQTSKGASALTEPLAPRGPMAHSRVFVSTDDLLDCLVNPQVTRMVAQLLIQGKSCDTF.

Residues 1–26 (MAAGCEGIAPPTLGERTVGEEGEPVK) are disordered. Residues 88–208 (ETECSYVDAT…EDTPFLYPTR (121 aa)) form an interaction with HSPB1 region. Positions 124–288 (WAYADYKYFV…HLARVEEAIT (165 aa)) constitute a JmjC domain. A disordered region spans residues 388–416 (LIPVTPASEERGGALEGDSEESVSSNGGH).

In terms of assembly, interacts with CRYAB and HSPB1.

The protein localises to the cytoplasm. Functionally, may play a role in cellular stress response. This Mus musculus (Mouse) protein is HSPB1-associated protein 1 (Hspbap1).